We begin with the raw amino-acid sequence, 230 residues long: MAAILARKSLSALRSRQLVLAGQAWQQGANTSNGTLLGTRTFATNDSFSTDKDDEEREQLAKELSKDWNSVFEQQINTLFLTEMVRGLMLTLKYFFEKKVTINYPFEKGPLSPRFRGEQPLRRYPTGEERCIACKLCEAICPAQAITIEAEAREDGSRRTTRYDIDMTKCIYCGFCQEACPVDAIVEGPNFEFATETHEELLYDKEKLLENGDRWETEIAENLRSESLYR.

The N-terminal 42 residues, 1 to 42 (MAAILARKSLSALRSRQLVLAGQAWQQGANTSNGTLLGTRTF), are a transit peptide targeting the mitochondrion. 4Fe-4S ferredoxin-type domains are found at residues 122–151 (RRYP…IEAE) and 161–190 (TRYD…EGPN). [4Fe-4S] cluster is bound by residues C131, C134, C137, C141, C170, C173, C176, and C180.

The protein belongs to the complex I 23 kDa subunit family. As to quaternary structure, complex I is composed of about 45 different subunits. This is a component of the iron-sulfur (IP) fragment of the enzyme. [4Fe-4S] cluster serves as cofactor.

The protein resides in the mitochondrion. The enzyme catalyses a ubiquinone + NADH + 5 H(+)(in) = a ubiquinol + NAD(+) + 4 H(+)(out). Its function is as follows. Core subunit of the mitochondrial membrane respiratory chain NADH dehydrogenase (Complex I) that is believed to belong to the minimal assembly required for catalysis. Complex I functions in the transfer of electrons from NADH to the respiratory chain. The immediate electron acceptor for the enzyme is believed to be ubiquinone. May donate electrons to ubiquinone. This is NADH dehydrogenase [ubiquinone] iron-sulfur protein 8, mitochondrial from Nicotiana tabacum (Common tobacco).